Consider the following 36-residue polypeptide: Delta-amaurobitoxin-Pl1c (36 aa).

4 cysteine pairs are disulfide-bonded: Cys3–Cys19, Cys10–Cys24, Cys18–Cys34, and Cys26–Cys32.

As to expression, expressed by the venom gland.

The protein localises to the secreted. Its function is as follows. Binds at site 4 of sodium channels (Nav) and inhibits the fast inactivation of cockroach channels. This toxin is active only on insects. Has a potent activity against S.litura larvae. The chain is Delta-amaurobitoxin-Pl1c from Pireneitega luctuosa (Tangled nest spider).